The chain runs to 468 residues: Cysteine--tRNA ligase (468 aa).

Cys36 lines the Zn(2+) pocket. The 'HIGH' region motif lies at 38–48 (PTVYNRSHIGN). Cys216, His241, and Glu245 together coordinate Zn(2+). The 'KMSKS' region signature appears at 274-278 (KMSKS). Lys277 provides a ligand contact to ATP.

Belongs to the class-I aminoacyl-tRNA synthetase family. Monomer. Zn(2+) is required as a cofactor.

It localises to the cytoplasm. The enzyme catalyses tRNA(Cys) + L-cysteine + ATP = L-cysteinyl-tRNA(Cys) + AMP + diphosphate. In Parvibaculum lavamentivorans (strain DS-1 / DSM 13023 / NCIMB 13966), this protein is Cysteine--tRNA ligase.